The primary structure comprises 148 residues: FAD synthase (148 aa).

ATP contacts are provided by residues 14 to 15 (VF), 19 to 22 (HVGH), and aspartate 100.

The protein belongs to the archaeal FAD synthase family. As to quaternary structure, homodimer. It depends on a divalent metal cation as a cofactor.

It carries out the reaction FMN + ATP + H(+) = FAD + diphosphate. Its pathway is cofactor biosynthesis; FAD biosynthesis; FAD from FMN: step 1/1. Functionally, catalyzes the transfer of the AMP portion of ATP to flavin mononucleotide (FMN) to produce flavin adenine dinucleotide (FAD) coenzyme. The polypeptide is FAD synthase (Thermococcus sibiricus (strain DSM 12597 / MM 739)).